The sequence spans 427 residues: Enolase 2 (427 aa).

Residue Q165 coordinates (2R)-2-phosphoglycerate. The Proton donor role is filled by E207. Residues D244, E287, and D314 each coordinate Mg(2+). Positions 339, 368, 369, and 390 each coordinate (2R)-2-phosphoglycerate. Residue K339 is the Proton acceptor of the active site.

The protein belongs to the enolase family. As to quaternary structure, component of the RNA degradosome, a multiprotein complex involved in RNA processing and mRNA degradation. Requires Mg(2+) as cofactor.

The protein localises to the cytoplasm. It is found in the secreted. The protein resides in the cell surface. It carries out the reaction (2R)-2-phosphoglycerate = phosphoenolpyruvate + H2O. Its pathway is carbohydrate degradation; glycolysis; pyruvate from D-glyceraldehyde 3-phosphate: step 4/5. In terms of biological role, catalyzes the reversible conversion of 2-phosphoglycerate (2-PG) into phosphoenolpyruvate (PEP). It is essential for the degradation of carbohydrates via glycolysis. The chain is Enolase 2 from Pseudomonas syringae pv. syringae (strain B728a).